The chain runs to 191 residues: Large ribosomal subunit protein uL5 (191 aa).

This sequence belongs to the universal ribosomal protein uL5 family. As to quaternary structure, part of the 50S ribosomal subunit; part of the 5S rRNA/L5/L18/L25 subcomplex. Contacts the 5S rRNA and the P site tRNA. Forms a bridge to the 30S subunit in the 70S ribosome.

This is one of the proteins that bind and probably mediate the attachment of the 5S RNA into the large ribosomal subunit, where it forms part of the central protuberance. In the 70S ribosome it contacts protein S13 of the 30S subunit (bridge B1b), connecting the 2 subunits; this bridge is implicated in subunit movement. Contacts the P site tRNA; the 5S rRNA and some of its associated proteins might help stabilize positioning of ribosome-bound tRNAs. The sequence is that of Large ribosomal subunit protein uL5 from Corynebacterium glutamicum (strain R).